The chain runs to 360 residues: Peptide chain release factor 1 (360 aa).

Glutamine 235 bears the N5-methylglutamine mark. Over residues 285 to 295 (AQQASEASTRK) the composition is skewed to polar residues. Positions 285 to 305 (AQQASEASTRKSLIGSGDRSD) are disordered.

The protein belongs to the prokaryotic/mitochondrial release factor family. Post-translationally, methylated by PrmC. Methylation increases the termination efficiency of RF1.

It localises to the cytoplasm. In terms of biological role, peptide chain release factor 1 directs the termination of translation in response to the peptide chain termination codons UAG and UAA. The protein is Peptide chain release factor 1 of Thiobacillus denitrificans (strain ATCC 25259 / T1).